A 162-amino-acid polypeptide reads, in one-letter code: NADH-quinone oxidoreductase subunit I 2 (162 aa).

4Fe-4S ferredoxin-type domains are found at residues 53–83 and 93–122; these read LRRYPNGEERCIACKLCEAVCPALAITIDSE and TRYDIDLFKCIYCGFCEESCPVDSIVETRI. Residues cysteine 63, cysteine 66, cysteine 69, cysteine 73, cysteine 102, cysteine 105, cysteine 108, and cysteine 112 each contribute to the [4Fe-4S] cluster site.

Belongs to the complex I 23 kDa subunit family. In terms of assembly, NDH-1 is composed of 14 different subunits. Subunits NuoA, H, J, K, L, M, N constitute the membrane sector of the complex. [4Fe-4S] cluster is required as a cofactor.

It is found in the cell inner membrane. It catalyses the reaction a quinone + NADH + 5 H(+)(in) = a quinol + NAD(+) + 4 H(+)(out). In terms of biological role, NDH-1 shuttles electrons from NADH, via FMN and iron-sulfur (Fe-S) centers, to quinones in the respiratory chain. The immediate electron acceptor for the enzyme in this species is believed to be ubiquinone. Couples the redox reaction to proton translocation (for every two electrons transferred, four hydrogen ions are translocated across the cytoplasmic membrane), and thus conserves the redox energy in a proton gradient. The sequence is that of NADH-quinone oxidoreductase subunit I 2 from Nitrosococcus oceani (strain ATCC 19707 / BCRC 17464 / JCM 30415 / NCIMB 11848 / C-107).